The sequence spans 647 residues: 2',3'-cyclic-nucleotide 2'-phosphodiesterase/3'-nucleotidase (647 aa).

A signal peptide spans 1–19 (MIKFSATLLATLIAASVNA). A divalent metal cation-binding residues include Asp-31, His-33, Asp-76, Asn-116, His-225, His-257, and His-259. Substrate-binding positions include Tyr-440 and 544–550 (YRAYGGK).

The protein belongs to the 5'-nucleotidase family. It depends on a divalent metal cation as a cofactor.

The protein resides in the periplasm. It carries out the reaction a nucleoside 2',3'-cyclic phosphate + H2O = a nucleoside 3'-phosphate + H(+). The enzyme catalyses a ribonucleoside 3'-phosphate + H2O = a ribonucleoside + phosphate. In terms of biological role, this bifunctional enzyme catalyzes two consecutive reactions during ribonucleic acid degradation. Converts a 2',3'-cyclic nucleotide to a 3'-nucleotide and then the 3'-nucleotide to the corresponding nucleoside and phosphate. The chain is 2',3'-cyclic-nucleotide 2'-phosphodiesterase/3'-nucleotidase (cpdB) from Salmonella typhimurium (strain LT2 / SGSC1412 / ATCC 700720).